A 302-amino-acid polypeptide reads, in one-letter code: Short-chain dehydrogenase/reductase 3 (302 aa).

Helical transmembrane passes span Leu-9 to Leu-29, Ile-170 to Thr-190, Ala-195 to Thr-215, and Ala-253 to Leu-273. Residue Ser-175 coordinates substrate. Tyr-188 acts as the Proton acceptor in catalysis.

The protein belongs to the short-chain dehydrogenases/reductases (SDR) family. In the retina, expressed in cone but not rod outer segments.

Its subcellular location is the membrane. It carries out the reaction all-trans-retinol + NADP(+) = all-trans-retinal + NADPH + H(+). Functionally, catalyzes the reduction of all-trans-retinal to all-trans-retinol in the presence of NADPH. The sequence is that of Short-chain dehydrogenase/reductase 3 (DHRS3) from Bos taurus (Bovine).